A 442-amino-acid polypeptide reads, in one-letter code: 3-phosphoshikimate 1-carboxyvinyltransferase (442 aa).

3-phosphoshikimate-binding residues include Lys25, Ser26, and Arg30. Residue Lys25 participates in phosphoenolpyruvate binding. Positions 96 and 124 each coordinate phosphoenolpyruvate. Ser171, Ser172, Gln173, Ser203, Asp325, and Lys352 together coordinate 3-phosphoshikimate. Gln173 is a binding site for phosphoenolpyruvate. The Proton acceptor role is filled by Asp325. Phosphoenolpyruvate is bound by residues Arg356, Arg400, and Lys425.

It belongs to the EPSP synthase family. As to quaternary structure, monomer.

The protein localises to the cytoplasm. It catalyses the reaction 3-phosphoshikimate + phosphoenolpyruvate = 5-O-(1-carboxyvinyl)-3-phosphoshikimate + phosphate. The protein operates within metabolic intermediate biosynthesis; chorismate biosynthesis; chorismate from D-erythrose 4-phosphate and phosphoenolpyruvate: step 6/7. Its function is as follows. Catalyzes the transfer of the enolpyruvyl moiety of phosphoenolpyruvate (PEP) to the 5-hydroxyl of shikimate-3-phosphate (S3P) to produce enolpyruvyl shikimate-3-phosphate and inorganic phosphate. The chain is 3-phosphoshikimate 1-carboxyvinyltransferase from Bordetella bronchiseptica (strain ATCC BAA-588 / NCTC 13252 / RB50) (Alcaligenes bronchisepticus).